We begin with the raw amino-acid sequence, 116 residues long: Large ribosomal subunit protein uL18 (116 aa).

It belongs to the universal ribosomal protein uL18 family. Part of the 50S ribosomal subunit; part of the 5S rRNA/L5/L18/L25 subcomplex. Contacts the 5S and 23S rRNAs.

This is one of the proteins that bind and probably mediate the attachment of the 5S RNA into the large ribosomal subunit, where it forms part of the central protuberance. This is Large ribosomal subunit protein uL18 from Pseudomonas entomophila (strain L48).